Consider the following 264-residue polypeptide: Thymidylate synthase (264 aa).

R21 contributes to the dUMP binding site. Residue H51 coordinates (6R)-5,10-methylene-5,6,7,8-tetrahydrofolate. 126–127 (RR) serves as a coordination point for dUMP. The Nucleophile role is filled by C146. Residues 166–169 (RSCD), N177, and 207–209 (HLY) contribute to the dUMP site. D169 contributes to the (6R)-5,10-methylene-5,6,7,8-tetrahydrofolate binding site. (6R)-5,10-methylene-5,6,7,8-tetrahydrofolate is bound at residue S263.

It belongs to the thymidylate synthase family. Bacterial-type ThyA subfamily. In terms of assembly, homodimer.

It localises to the cytoplasm. It catalyses the reaction dUMP + (6R)-5,10-methylene-5,6,7,8-tetrahydrofolate = 7,8-dihydrofolate + dTMP. It functions in the pathway pyrimidine metabolism; dTTP biosynthesis. In terms of biological role, catalyzes the reductive methylation of 2'-deoxyuridine-5'-monophosphate (dUMP) to 2'-deoxythymidine-5'-monophosphate (dTMP) while utilizing 5,10-methylenetetrahydrofolate (mTHF) as the methyl donor and reductant in the reaction, yielding dihydrofolate (DHF) as a by-product. This enzymatic reaction provides an intracellular de novo source of dTMP, an essential precursor for DNA biosynthesis. The chain is Thymidylate synthase from Buchnera aphidicola subsp. Acyrthosiphon pisum (strain APS) (Acyrthosiphon pisum symbiotic bacterium).